The sequence spans 412 residues: Subtilisin-like protease 6 (412 aa).

A signal peptide spans 1–20 (MGFITKAIPIVLAALSTVNG). The propeptide occupies 21 to 126 (AKILEAGPHA…VVRTSTNGTN (106 aa)). The region spanning 36–120 (KYIVVMKREV…YIEPDFVVRT (85 aa)) is the Inhibitor I9 domain. Asparagine 123 and asparagine 126 each carry an N-linked (GlcNAc...) asparagine glycan. The region spanning 135-412 (SWGLARVSSK…SKLIYNGSGK (278 aa)) is the Peptidase S8 domain. Residues aspartate 167 and histidine 198 each act as charge relay system in the active site. 2 N-linked (GlcNAc...) asparagine glycosylation sites follow: asparagine 252 and asparagine 264. Residue serine 358 is the Charge relay system of the active site. Asparagine 408 carries N-linked (GlcNAc...) asparagine glycosylation.

It belongs to the peptidase S8 family.

It localises to the secreted. In terms of biological role, secreted subtilisin-like serine protease with keratinolytic activity that contributes to pathogenicity. This chain is Subtilisin-like protease 6 (SUB6), found in Trichophyton equinum (Horse ringworm fungus).